The sequence spans 1080 residues: Carbamoyl phosphate synthase large chain (1080 aa).

The carboxyphosphate synthetic domain stretch occupies residues 1–403 (MPKRTDLETI…SLQKALRGLE (403 aa)). Arg-129, Arg-169, Gly-175, Gly-176, Glu-208, Val-210, Glu-215, Gly-241, Val-242, His-243, Gln-285, and Glu-299 together coordinate ATP. In terms of domain architecture, ATP-grasp 1 spans 133 to 328 (RVAMGEIGLD…IAKVAAKLAV (196 aa)). Mg(2+) is bound by residues Gln-285, Glu-299, and Asn-301. 3 residues coordinate Mn(2+): Gln-285, Glu-299, and Asn-301. The interval 404-554 (TGKIGLDPTG…YSTYEDECEA (151 aa)) is oligomerization domain. Residues 555–942 (LPTDRDKIMI…AFARAQEAGG (388 aa)) form a carbamoyl phosphate synthetic domain region. The region spanning 679–876 (QQLVDKLGLK…LAKIAARCMA (198 aa)) is the ATP-grasp 2 domain. The ATP site is built by Arg-715, Arg-754, Leu-756, Glu-761, Gly-787, Val-788, His-789, Ser-790, Gln-830, and Glu-847. The Mg(2+) site is built by Gln-830, Glu-847, and Asn-849. Mn(2+) contacts are provided by Gln-830, Glu-847, and Asn-849. The MGS-like domain maps to 943-1080 (IKAPPLGKAF…LQELHKELEA (138 aa)). The tract at residues 943–1080 (IKAPPLGKAF…LQELHKELEA (138 aa)) is allosteric domain.

The protein belongs to the CarB family. Composed of two chains; the small (or glutamine) chain promotes the hydrolysis of glutamine to ammonia, which is used by the large (or ammonia) chain to synthesize carbamoyl phosphate. Tetramer of heterodimers (alpha,beta)4. Mg(2+) is required as a cofactor. Mn(2+) serves as cofactor.

The catalysed reaction is hydrogencarbonate + L-glutamine + 2 ATP + H2O = carbamoyl phosphate + L-glutamate + 2 ADP + phosphate + 2 H(+). It catalyses the reaction hydrogencarbonate + NH4(+) + 2 ATP = carbamoyl phosphate + 2 ADP + phosphate + 2 H(+). It functions in the pathway amino-acid biosynthesis; L-arginine biosynthesis; carbamoyl phosphate from bicarbonate: step 1/1. It participates in pyrimidine metabolism; UMP biosynthesis via de novo pathway; (S)-dihydroorotate from bicarbonate: step 1/3. Large subunit of the glutamine-dependent carbamoyl phosphate synthetase (CPSase). CPSase catalyzes the formation of carbamoyl phosphate from the ammonia moiety of glutamine, carbonate, and phosphate donated by ATP, constituting the first step of 2 biosynthetic pathways, one leading to arginine and/or urea and the other to pyrimidine nucleotides. The large subunit (synthetase) binds the substrates ammonia (free or transferred from glutamine from the small subunit), hydrogencarbonate and ATP and carries out an ATP-coupled ligase reaction, activating hydrogencarbonate by forming carboxy phosphate which reacts with ammonia to form carbamoyl phosphate. The polypeptide is Carbamoyl phosphate synthase large chain (Xanthomonas axonopodis pv. citri (strain 306)).